A 1024-amino-acid chain; its full sequence is Error-prone DNA polymerase (1024 aa).

Belongs to the DNA polymerase type-C family. DnaE2 subfamily.

It is found in the cytoplasm. The enzyme catalyses DNA(n) + a 2'-deoxyribonucleoside 5'-triphosphate = DNA(n+1) + diphosphate. Functionally, DNA polymerase involved in damage-induced mutagenesis and translesion synthesis (TLS). It is not the major replicative DNA polymerase. The protein is Error-prone DNA polymerase of Pseudomonas paraeruginosa (strain DSM 24068 / PA7) (Pseudomonas aeruginosa (strain PA7)).